Here is a 49-residue protein sequence, read N- to C-terminus: Putative exported peptide YydF (49 aa).

Functionally, suggested to be the precursor for an exported, modified peptide that has antimicrobial and/or signaling properties. Synthesis requires YydG and YydH; the peptide is proposed to be exported by the YydIJ transporter. In the absence of the transporter, the modified peptide activates the LiaRS two-component regulatory system, possibly by eliciting cell envelope stress. This activation can occur in trans in cocultured cells lacking either the transporter or the whole operon. In Bacillus subtilis (strain 168), this protein is Putative exported peptide YydF (yydF).